The chain runs to 147 residues: Nucleoside diphosphate kinase (147 aa).

Residues lysine 11, phenylalanine 59, arginine 87, threonine 93, arginine 104, and asparagine 114 each contribute to the ATP site. Catalysis depends on histidine 117, which acts as the Pros-phosphohistidine intermediate.

This sequence belongs to the NDK family. In terms of assembly, homotetramer. Requires Mg(2+) as cofactor.

It localises to the cytoplasm. It carries out the reaction a 2'-deoxyribonucleoside 5'-diphosphate + ATP = a 2'-deoxyribonucleoside 5'-triphosphate + ADP. The catalysed reaction is a ribonucleoside 5'-diphosphate + ATP = a ribonucleoside 5'-triphosphate + ADP. Functionally, major role in the synthesis of nucleoside triphosphates other than ATP. The ATP gamma phosphate is transferred to the NDP beta phosphate via a ping-pong mechanism, using a phosphorylated active-site intermediate. This is Nucleoside diphosphate kinase from Anaeromyxobacter sp. (strain K).